The following is a 505-amino-acid chain: ATP synthase subunit alpha (505 aa).

171 to 178 (GDRQTGKT) contributes to the ATP binding site.

This sequence belongs to the ATPase alpha/beta chains family. As to quaternary structure, F-type ATPases have 2 components, CF(1) - the catalytic core - and CF(0) - the membrane proton channel. CF(1) has five subunits: alpha(3), beta(3), gamma(1), delta(1), epsilon(1). CF(0) has three main subunits: a(1), b(2) and c(9-12). The alpha and beta chains form an alternating ring which encloses part of the gamma chain. CF(1) is attached to CF(0) by a central stalk formed by the gamma and epsilon chains, while a peripheral stalk is formed by the delta and b chains.

It is found in the cell inner membrane. The enzyme catalyses ATP + H2O + 4 H(+)(in) = ADP + phosphate + 5 H(+)(out). Functionally, produces ATP from ADP in the presence of a proton gradient across the membrane. The alpha chain is a regulatory subunit. In Campylobacter curvus (strain 525.92), this protein is ATP synthase subunit alpha.